The sequence spans 104 residues: uncharacterized protein (104 aa).

Transmembrane regions (helical) follow at residues Leu16–Tyr36 and Gly44–Ile64.

The protein localises to the cell membrane. This is an uncharacterized protein from Bacillus anthracis.